We begin with the raw amino-acid sequence, 126 residues long: Protein ApaG (126 aa).

The ApaG domain maps to 2-126 (SALDDSIRVE…FRLALPGLLH (125 aa)).

The sequence is that of Protein ApaG from Shewanella sp. (strain MR-4).